The following is a 137-amino-acid chain: Proofreading thioesterase EntH (137 aa).

Catalysis depends on Glu-63, which acts as the Nucleophile or proton acceptor.

This sequence belongs to the thioesterase PaaI family. As to quaternary structure, homotetramer. Dimer of dimers. Interacts specifically with the aryl carrier protein (ArCP) domain of EntB.

The protein resides in the cytoplasm. It participates in siderophore biosynthesis; enterobactin biosynthesis. Required for optimal enterobactin synthesis. Acts as a proofreading enzyme that prevents EntB misacylation by hydrolyzing the thioester bound existing between EntB and wrongly charged molecules. In Cronobacter sakazakii (strain ATCC BAA-894) (Enterobacter sakazakii), this protein is Proofreading thioesterase EntH.